Here is a 229-residue protein sequence, read N- to C-terminus: DNA mismatch repair protein MutH (229 aa).

This sequence belongs to the MutH family.

It is found in the cytoplasm. Sequence-specific endonuclease that cleaves unmethylated GATC sequences. It is involved in DNA mismatch repair. The chain is DNA mismatch repair protein MutH from Escherichia coli (strain SMS-3-5 / SECEC).